Here is a 476-residue protein sequence, read N- to C-terminus: Aspartyl/glutamyl-tRNA(Asn/Gln) amidotransferase subunit B (476 aa).

It belongs to the GatB/GatE family. GatB subfamily. Heterotrimer of A, B and C subunits.

The enzyme catalyses L-glutamyl-tRNA(Gln) + L-glutamine + ATP + H2O = L-glutaminyl-tRNA(Gln) + L-glutamate + ADP + phosphate + H(+). It carries out the reaction L-aspartyl-tRNA(Asn) + L-glutamine + ATP + H2O = L-asparaginyl-tRNA(Asn) + L-glutamate + ADP + phosphate + 2 H(+). Functionally, allows the formation of correctly charged Asn-tRNA(Asn) or Gln-tRNA(Gln) through the transamidation of misacylated Asp-tRNA(Asn) or Glu-tRNA(Gln) in organisms which lack either or both of asparaginyl-tRNA or glutaminyl-tRNA synthetases. The reaction takes place in the presence of glutamine and ATP through an activated phospho-Asp-tRNA(Asn) or phospho-Glu-tRNA(Gln). This chain is Aspartyl/glutamyl-tRNA(Asn/Gln) amidotransferase subunit B, found in Oleidesulfovibrio alaskensis (strain ATCC BAA-1058 / DSM 17464 / G20) (Desulfovibrio alaskensis).